We begin with the raw amino-acid sequence, 297 residues long: N-acetylneuraminate lyase (297 aa).

The aceneuramate site is built by Ser-47 and Thr-48. Tyr-137 acts as the Proton donor in catalysis. The Schiff-base intermediate with substrate role is filled by Lys-165. The aceneuramate site is built by Thr-167, Gly-189, Asp-191, Glu-192, and Ser-208.

Belongs to the DapA family. NanA subfamily. In terms of assembly, homotetramer.

The protein resides in the cytoplasm. The enzyme catalyses aceneuramate = aldehydo-N-acetyl-D-mannosamine + pyruvate. The protein operates within amino-sugar metabolism; N-acetylneuraminate degradation; D-fructose 6-phosphate from N-acetylneuraminate: step 1/5. Its function is as follows. Catalyzes the reversible aldol cleavage of N-acetylneuraminic acid (sialic acid; Neu5Ac) to form pyruvate and N-acetylmannosamine (ManNAc) via a Schiff base intermediate. This Salmonella paratyphi A (strain AKU_12601) protein is N-acetylneuraminate lyase.